A 735-amino-acid polypeptide reads, in one-letter code: Protostadienol synthase helA (735 aa).

A PFTB 1 repeat occupies Lys-132–Gly-173. Asp-463 functions as the Proton donor in the catalytic mechanism. PFTB repeat units lie at residues Leu-490–Val-531, Leu-567–Gly-607, and Cys-616–Gly-663.

This sequence belongs to the terpene cyclase/mutase family.

The catalysed reaction is (S)-2,3-epoxysqualene = (17Z)-protosta-17(20),24-dien-3beta-ol. It participates in mycotoxin biosynthesis. Protostadienol synthase; part of the gene cluster that mediates the biosynthesis of helvolic acid, an antibacterial nortriterpenoid. Protostadienol synthase helA cyclizes (3S)-oxidosqualene to (17Z)-protosta-17(20),24-dien-3-beta-ol (protostadienol). The synthesis of protostadienol is followed by several steps of monooxygenation, dehydrogenation, and acyl transfer to yield the final helvolic acid. Following the cyclization to the tetracyclic protostadienol by helA, cytochrome P450 monooxygenases helB1-mediated and helB2-mediated oxidation at C-4 and C-16, acyltransferase helD2-dependent acetylation of 16-OH, oxidation of C-21 by cytochrome P450 monooxygenase helB4, and short chain dehydrogenase helC-dependent oxidative decarboxylation yield the fusidane skeleton. This intermediate is further modified in three additional steps mediated by the cytochrome P450 monooxygenase helB3, the acyltransferase helD1, and the 3-ketosteroid 1-dehydrogenase helE to give helvolic acid. Compared with the late stages in the biosynthesis of helvolic acid, enzymes involved in the early stage modifications act in a relatively strict order. The hydroxylation of C-16 by helB1 and subsequent acetylation by helD2 should occur before the helB3-mediated oxidation of C-21. C-4 demethylation in fusidane-type antibiotics proceeds in an unusual manner though it is also achieved by oxidative decarboxylation. The methyl group at C-4 beta position is oxidized by helB1 and subsequently removed by the short chain dehydrogenase helC. In Aspergillus fumigatus (strain ATCC MYA-4609 / CBS 101355 / FGSC A1100 / Af293) (Neosartorya fumigata), this protein is Protostadienol synthase helA.